A 520-amino-acid chain; its full sequence is Leucine aminopeptidase 1 (520 aa).

Residues Lys-288 and Asp-293 each coordinate Mn(2+). Lys-300 is a catalytic residue. Mn(2+) contacts are provided by Asp-313, Asp-373, and Glu-375. Arg-377 is an active-site residue.

The protein belongs to the peptidase M17 family. As to quaternary structure, homohexamer (dimer of homotrimers). The cofactor is Mn(2+).

Its subcellular location is the cytoplasm. It carries out the reaction Release of an N-terminal amino acid, Xaa-|-Yaa-, in which Xaa is preferably Leu, but may be other amino acids including Pro although not Arg or Lys, and Yaa may be Pro. Amino acid amides and methyl esters are also readily hydrolyzed, but rates on arylamides are exceedingly low.. It catalyses the reaction Release of N-terminal proline from a peptide.. Functionally, presumably involved in the processing and regular turnover of intracellular proteins. Catalyzes the removal of unsubstituted N-terminal amino acids from various peptides. Possesses leucine aminopeptidase activity against the model substrate leucine-amido methyl coumarin. Possesses Cys-Gly dipeptidase activity. In addition, can cleave Cys-Leu and Leu-Cys dipeptides. Functions as a molecular chaperone to protect proteins from heat-induced damage. The sequence is that of Leucine aminopeptidase 1 from Arabidopsis thaliana (Mouse-ear cress).